We begin with the raw amino-acid sequence, 294 residues long: 4-hydroxy-tetrahydrodipicolinate synthase (294 aa).

Thr44 contributes to the pyruvate binding site. Tyr132 acts as the Proton donor/acceptor in catalysis. Lys161 acts as the Schiff-base intermediate with substrate in catalysis. Ile206 contacts pyruvate.

It belongs to the DapA family. As to quaternary structure, homotetramer; dimer of dimers.

Its subcellular location is the cytoplasm. The enzyme catalyses L-aspartate 4-semialdehyde + pyruvate = (2S,4S)-4-hydroxy-2,3,4,5-tetrahydrodipicolinate + H2O + H(+). The protein operates within amino-acid biosynthesis; L-lysine biosynthesis via DAP pathway; (S)-tetrahydrodipicolinate from L-aspartate: step 3/4. Functionally, catalyzes the condensation of (S)-aspartate-beta-semialdehyde [(S)-ASA] and pyruvate to 4-hydroxy-tetrahydrodipicolinate (HTPA). This chain is 4-hydroxy-tetrahydrodipicolinate synthase, found in Thermotoga petrophila (strain ATCC BAA-488 / DSM 13995 / JCM 10881 / RKU-1).